The sequence spans 262 residues: Hydroxyethylthiazole kinase (262 aa).

Residue Met-50 participates in substrate binding. The ATP site is built by Arg-125 and Thr-171. Gly-198 serves as a coordination point for substrate.

This sequence belongs to the Thz kinase family. It depends on Mg(2+) as a cofactor.

The enzyme catalyses 5-(2-hydroxyethyl)-4-methylthiazole + ATP = 4-methyl-5-(2-phosphooxyethyl)-thiazole + ADP + H(+). Its pathway is cofactor biosynthesis; thiamine diphosphate biosynthesis; 4-methyl-5-(2-phosphoethyl)-thiazole from 5-(2-hydroxyethyl)-4-methylthiazole: step 1/1. Catalyzes the phosphorylation of the hydroxyl group of 4-methyl-5-beta-hydroxyethylthiazole (THZ). This Citrobacter koseri (strain ATCC BAA-895 / CDC 4225-83 / SGSC4696) protein is Hydroxyethylthiazole kinase.